The sequence spans 76 residues: Adropin (76 aa).

Residues 1–33 form the signal peptide; it reads MGAAISQGALIAIVCNGLVGFLLLLLWVILCWA. Positions 41–76 are disordered; it reads VDSLSESSPNSSPGPCPEKAPPPQKPSHEGSYLLQP. Residues 52 to 65 show a composition bias toward pro residues; the sequence is SPGPCPEKAPPPQK.

As to expression, expressed in liver and brain.

The protein localises to the secreted. In terms of biological role, involved in the regulation of glucose homeostasis and lipid metabolism. The protein is Adropin (ENHO) of Homo sapiens (Human).